Here is a 178-residue protein sequence, read N- to C-terminus: Peptide methionine sulfoxide reductase MsrA (178 aa).

Cys-12 is a catalytic residue.

This sequence belongs to the MsrA Met sulfoxide reductase family.

It carries out the reaction L-methionyl-[protein] + [thioredoxin]-disulfide + H2O = L-methionyl-(S)-S-oxide-[protein] + [thioredoxin]-dithiol. It catalyses the reaction [thioredoxin]-disulfide + L-methionine + H2O = L-methionine (S)-S-oxide + [thioredoxin]-dithiol. In terms of biological role, has an important function as a repair enzyme for proteins that have been inactivated by oxidation. Catalyzes the reversible oxidation-reduction of methionine sulfoxide in proteins to methionine. In Erwinia tasmaniensis (strain DSM 17950 / CFBP 7177 / CIP 109463 / NCPPB 4357 / Et1/99), this protein is Peptide methionine sulfoxide reductase MsrA.